A 407-amino-acid polypeptide reads, in one-letter code: Schlafen-like protein 1 (407 aa).

Disordered stretches follow at residues 1-28 and 137-191; these read MTPMKRSVQTQVSEPFMESWGEESLPEL and AQGP…CQGR. The span at 155 to 167 shows a compositional bias: low complexity; the sequence is GLSPGPSPGSGVP. Over residues 181–190 the composition is skewed to polar residues; the sequence is QAQQLQSCQG. 261-268 lines the ATP pocket; it reads GVEDSGLV. Residues 366 to 398 are a coiled coil; the sequence is RQRWLVELGKLEEKMKALMMEKEQLQQQLQQHG.

The protein belongs to the Schlafen family. Subgroup I subfamily.

This is Schlafen-like protein 1 (SLFNL1) from Homo sapiens (Human).